Here is a 264-residue protein sequence, read N- to C-terminus: S-adenosylmethionine decarboxylase proenzyme (264 aa).

The Schiff-base intermediate with substrate; via pyruvic acid role is filled by serine 112. A Pyruvic acid (Ser); by autocatalysis modification is found at serine 112. The Proton acceptor; for processing activity role is filled by histidine 117. Residue cysteine 140 is the Proton donor; for catalytic activity of the active site.

It belongs to the prokaryotic AdoMetDC family. Type 2 subfamily. As to quaternary structure, heterooctamer of four alpha and four beta chains arranged as a tetramer of alpha/beta heterodimers. Pyruvate serves as cofactor. Post-translationally, is synthesized initially as an inactive proenzyme. Formation of the active enzyme involves a self-maturation process in which the active site pyruvoyl group is generated from an internal serine residue via an autocatalytic post-translational modification. Two non-identical subunits are generated from the proenzyme in this reaction, and the pyruvate is formed at the N-terminus of the alpha chain, which is derived from the carboxyl end of the proenzyme. The post-translation cleavage follows an unusual pathway, termed non-hydrolytic serinolysis, in which the side chain hydroxyl group of the serine supplies its oxygen atom to form the C-terminus of the beta chain, while the remainder of the serine residue undergoes an oxidative deamination to produce ammonia and the pyruvoyl group blocking the N-terminus of the alpha chain.

It catalyses the reaction S-adenosyl-L-methionine + H(+) = S-adenosyl 3-(methylsulfanyl)propylamine + CO2. The protein operates within amine and polyamine biosynthesis; S-adenosylmethioninamine biosynthesis; S-adenosylmethioninamine from S-adenosyl-L-methionine: step 1/1. Its function is as follows. Catalyzes the decarboxylation of S-adenosylmethionine to S-adenosylmethioninamine (dcAdoMet), the propylamine donor required for the synthesis of the polyamines spermine and spermidine from the diamine putrescine. This is S-adenosylmethionine decarboxylase proenzyme from Shigella dysenteriae serotype 1 (strain Sd197).